Reading from the N-terminus, the 127-residue chain is Protein ApaG (127 aa).

The ApaG domain maps to 3–127; the sequence is EGKKYEIAVK…FILSVPRILH (125 aa).

The polypeptide is Protein ApaG (Nitrosospira multiformis (strain ATCC 25196 / NCIMB 11849 / C 71)).